Here is a 128-residue protein sequence, read N- to C-terminus: Diacylglycerol kinase (128 aa).

Glu-34 is a binding site for a divalent metal cation. The next 2 helical transmembrane spans lie at 35 to 55 (SAFR…SYLT) and 58 to 78 (FLEW…ELIN). Glu-75 (proton acceptor) is an active-site residue. Glu-82 contacts a divalent metal cation. A helical transmembrane segment spans residues 108–128 (LIGLIFWAFIWGRYLLTLYFN).

Belongs to the bacterial diacylglycerol kinase family. Mg(2+) serves as cofactor.

It localises to the cell inner membrane. The enzyme catalyses a 1,2-diacyl-sn-glycerol + ATP = a 1,2-diacyl-sn-glycero-3-phosphate + ADP + H(+). In terms of biological role, catalyzes the ATP-dependent phosphorylation of sn-l,2-diacylglycerol (DAG) to phosphatidic acid. Involved in the recycling of diacylglycerol produced as a by-product during membrane-derived oligosaccharide (MDO) biosynthesis. In Helicobacter pylori (strain J99 / ATCC 700824) (Campylobacter pylori J99), this protein is Diacylglycerol kinase (dgkA).